The following is a 288-amino-acid chain: ATP synthase subunit a (288 aa).

Helical transmembrane passes span 47–67, 104–124, 157–177, 199–219, 237–257, and 258–278; these read LDSM…FWLV, LIAP…LMDL, DPNI…YYSI, PIAK…TLIA, LIFV…SVPW, and AIFH…LTIV.

This sequence belongs to the ATPase A chain family. In terms of assembly, F-type ATPases have 2 components, CF(1) - the catalytic core - and CF(0) - the membrane proton channel. CF(1) has five subunits: alpha(3), beta(3), gamma(1), delta(1), epsilon(1). CF(0) has three main subunits: a(1), b(2) and c(9-12). The alpha and beta chains form an alternating ring which encloses part of the gamma chain. CF(1) is attached to CF(0) by a central stalk formed by the gamma and epsilon chains, while a peripheral stalk is formed by the delta and b chains.

It is found in the cell inner membrane. Functionally, key component of the proton channel; it plays a direct role in the translocation of protons across the membrane. The protein is ATP synthase subunit a of Psychrobacter sp. (strain PRwf-1).